A 389-amino-acid chain; its full sequence is Oxytocin receptor (389 aa).

The interval 1–27 (MEGELAANWSTEAVNSSAAPPGAEGNC) is disordered. Topologically, residues 1–38 (MEGELAANWSTEAVNSSAAPPGAEGNCTAGPPRRNEAL) are extracellular. N8, N15, and N26 each carry an N-linked (GlcNAc...) asparagine glycan. Residues 8–18 (NWSTEAVNSSA) show a composition bias toward polar residues. The helical transmembrane segment at 39–63 (ARVEVAVLCLILFLALSGNACVLLA) threads the bilayer. The Cytoplasmic portion of the chain corresponds to 64–74 (LRTTRHKHSRL). Residues 75–97 (FFFMKHLSIADLVVAVFQVLPQL) form a helical membrane-spanning segment. The Extracellular portion of the chain corresponds to 98–113 (LWDITFRFYGPDLLCR). C112 and C187 are oxidised to a cystine. A helical transmembrane segment spans residues 114–135 (LVKYLQVVGMFASTYLLLLMSL). The Cytoplasmic segment spans residues 136–154 (DRCLAICQPLRSLRRRTDR). The helical transmembrane segment at 155-175 (LAVLATWLGCLVASAPQVHIF) threads the bilayer. Over 176 to 202 (SLREVADGVFDCWAVFIQPWGPKAYIT) the chain is Extracellular. Residues 203-225 (WITLAVYIVPVIVLAACYGLISF) traverse the membrane as a helical segment. Residues 226–275 (KIWQNLRLKTAAAAAAEAPEGAAAGDGGRMALARVSSVKLISKAKIRTVK) lie on the Cytoplasmic side of the membrane. The helical transmembrane segment at 276–294 (MTFIIVLAFIVCWTPFFFV) threads the bilayer. Residues 295-309 (QMWSVWDANAPKEAS) are Extracellular-facing. A helical membrane pass occupies residues 310–332 (AFIIVMLLASLNSCCNPWIYMLF). At 333–389 (TGHLFHELVQRFLCCSASYLKGNRLGETSTSKKSNSSSFVLSHRSSSQRSCSQPSTA) the chain is on the cytoplasmic side. The tract at residues 358 to 389 (GETSTSKKSNSSSFVLSHRSSSQRSCSQPSTA) is disordered. The span at 360 to 389 (TSTSKKSNSSSFVLSHRSSSQRSCSQPSTA) shows a compositional bias: low complexity. Residues S366 and S368 each carry the phosphoserine modification.

This sequence belongs to the G-protein coupled receptor 1 family. Vasopressin/oxytocin receptor subfamily.

Its subcellular location is the cell membrane. Its function is as follows. Receptor for oxytocin. The activity of this receptor is mediated by G proteins which activate a phosphatidylinositol-calcium second messenger system. In Macaca mulatta (Rhesus macaque), this protein is Oxytocin receptor (OXTR).